A 288-amino-acid chain; its full sequence is Polyamine aminopropyltransferase (288 aa).

The PABS domain occupies 9-238 (ETLHDQFGQY…GIMTFAWATD (230 aa)). An S-methyl-5'-thioadenosine-binding site is contributed by Gln33. Positions 64 and 88 each coordinate spermidine. S-methyl-5'-thioadenosine-binding positions include Glu108 and 140–141 (DG). The active-site Proton acceptor is Asp158. 158-161 (DCTD) contributes to the spermidine binding site. An S-methyl-5'-thioadenosine-binding site is contributed by Pro165.

The protein belongs to the spermidine/spermine synthase family. As to quaternary structure, homodimer or homotetramer.

Its subcellular location is the cytoplasm. It carries out the reaction S-adenosyl 3-(methylsulfanyl)propylamine + putrescine = S-methyl-5'-thioadenosine + spermidine + H(+). It participates in amine and polyamine biosynthesis; spermidine biosynthesis; spermidine from putrescine: step 1/1. In terms of biological role, catalyzes the irreversible transfer of a propylamine group from the amino donor S-adenosylmethioninamine (decarboxy-AdoMet) to putrescine (1,4-diaminobutane) to yield spermidine. In Shigella sonnei (strain Ss046), this protein is Polyamine aminopropyltransferase.